The sequence spans 231 residues: MPRYYCDYCDTYLTHDSPSVRKQHNAGYKHKANVRTYYQQFEEQQTQSLIDQRIKEHLGQAAAFQAGAPFNQHMLTFPGAVARPRLPILPTPGMPHGFPQAPGAPLMPGVRPPILPAPGIPGYPGGPPTMLQPGAPPGSMPQPGAPPGSMPQPGAPPGSMPMQMAPLPRPPTLPPPTSGVPGAPIPNSAAPPAIYQTNPPAPAGPTSGAPPAPPTAPQPAFSYAQPSEGNH.

The Matrin-type zinc-finger motif lies at 4 to 36 (YYCDYCDTYLTHDSPSVRKQHNAGYKHKANVRT). Pro residues-rich tracts occupy residues 117–127 (APGIPGYPGGP), 134–159 (GAPPGSMPQPGAPPGSMPQPGAPPGS), and 167–178 (LPRPPTLPPPTS). A disordered region spans residues 117-231 (APGIPGYPGG…SYAQPSEGNH (115 aa)). A compositionally biased stretch (low complexity) spans 181 to 193 (PGAPIPNSAAPPA). Pro residues predominate over residues 199–217 (PPAPAGPTSGAPPAPPTAP).

Belongs to the U1 small nuclear ribonucleoprotein C family. As to quaternary structure, U1 snRNP is composed of the 7 core Sm proteins B/B', D1, D2, D3, E, F and G that assemble in a heptameric protein ring on the Sm site of the small nuclear RNA to form the core snRNP, and at least 3 U1 snRNP-specific proteins U1-70K, U1-A and U1-C. U1-C interacts with U1 snRNA and the 5' splice-site region of the pre-mRNA.

The protein resides in the nucleus. Functionally, component of the spliceosomal U1 snRNP, which is essential for recognition of the pre-mRNA 5' splice-site and the subsequent assembly of the spliceosome. U1-C is directly involved in initial 5' splice-site recognition for both constitutive and regulated alternative splicing. The interaction with the 5' splice-site seems to precede base-pairing between the pre-mRNA and the U1 snRNA. Stimulates commitment or early (E) complex formation by stabilizing the base pairing of the 5' end of the U1 snRNA and the 5' splice-site region. This Sorghum bicolor (Sorghum) protein is U1 small nuclear ribonucleoprotein C-1.